We begin with the raw amino-acid sequence, 144 residues long: TSC22 domain family protein 1 (144 aa).

The segment at 77 to 98 (LKEQIKELIEKNSQLEQENNLL) is leucine-zipper. The tract at residues 109–144 (QFQAQLQTGSPPATTQPQGTTQPPAQPASQGSGPTA) is disordered. Low complexity predominate over residues 115 to 144 (QTGSPPATTQPQGTTQPPAQPASQGSGPTA).

This sequence belongs to the TSC-22/Dip/Bun family. In terms of assembly, forms homodimers. Forms a heterodimer with TSC22D4/THG1. Interacts with histone H1-2. Interacts with GNL3.

It is found in the cytoplasm. The protein resides in the nucleus. Transcriptional repressor. Plays a role in the repression of hematopoietic precursor cell growth. Promotes IL2 deprivation-induced apoptosis in T-lymphocytes, via repression of TSC22D3/GILZ transcription and activation of the caspase cascade. Positively regulates cell death in response to TGFB3 during mammary gland involution. In Bos taurus (Bovine), this protein is TSC22 domain family protein 1.